The chain runs to 318 residues: NADH-ubiquinone oxidoreductase chain 1 (318 aa).

8 helical membrane-spanning segments follow: residues 2-22, 69-89, 100-120, 146-166, 171-191, 231-251, 253-273, and 285-305; these read FMIN…FLTL, LLFT…WLPL, LGVL…LWSG, LAII…TNLI, HMWL…STLA, IMMM…TPLV, GIYT…FLWI, and LMHL…MWHV.

The protein belongs to the complex I subunit 1 family. In terms of assembly, core subunit of respiratory chain NADH dehydrogenase (Complex I) which is composed of 45 different subunits.

The protein localises to the mitochondrion inner membrane. The catalysed reaction is a ubiquinone + NADH + 5 H(+)(in) = a ubiquinol + NAD(+) + 4 H(+)(out). Core subunit of the mitochondrial membrane respiratory chain NADH dehydrogenase (Complex I) which catalyzes electron transfer from NADH through the respiratory chain, using ubiquinone as an electron acceptor. Essential for the catalytic activity and assembly of complex I. This is NADH-ubiquinone oxidoreductase chain 1 (MT-ND1) from Myrmecophaga tridactyla (Giant anteater).